The following is a 480-amino-acid chain: GTPase Der (480 aa).

2 EngA-type G domains span residues 5–170 (PVVA…PSQE) and 178–351 (LKLA…QSSM). GTP contacts are provided by residues 11-18 (GRPNVGKS), 58-62 (DTGGI), 123-126 (NKVD), 184-191 (GRPNVGKS), 231-235 (DTAGV), and 296-299 (NKWD). Residues 352–436 (FEVSTNRLTQ…PLNVVFKLNE (85 aa)) enclose the KH-like domain. The span at 438–454 (PYANKSDTPTKAKTQQL) shows a compositional bias: polar residues. A disordered region spans residues 438 to 480 (PYANKSDTPTKAKTQQLRQRERNRAQKFTTKDKPRFTNKDKKR). The span at 455–480 (RQRERNRAQKFTTKDKPRFTNKDKKR) shows a compositional bias: basic and acidic residues.

The protein belongs to the TRAFAC class TrmE-Era-EngA-EngB-Septin-like GTPase superfamily. EngA (Der) GTPase family. Associates with the 50S ribosomal subunit.

In terms of biological role, GTPase that plays an essential role in the late steps of ribosome biogenesis. This chain is GTPase Der, found in Psychrobacter cryohalolentis (strain ATCC BAA-1226 / DSM 17306 / VKM B-2378 / K5).